The primary structure comprises 422 residues: Probable glucuronosyltransferase Os01g0926400 (422 aa).

Over 1 to 8 the chain is Cytoplasmic; it reads MGTRPCAG. A helical; Signal-anchor for type II membrane protein transmembrane segment spans residues 9–29; sequence VASAVAAAVAVLLLAVSCFAA. Residues 30–422 lie on the Lumenal side of the membrane; sequence AATTTQKHGR…QGLENDLKPW (393 aa). A glycan (N-linked (GlcNAc...) asparagine) is linked at asparagine 149.

This sequence belongs to the glycosyltransferase 47 family.

It localises to the golgi apparatus membrane. Involved in the synthesis of glucuronoxylan hemicellulose in secondary cell walls. The sequence is that of Probable glucuronosyltransferase Os01g0926400 from Oryza sativa subsp. japonica (Rice).